The primary structure comprises 156 residues: Perlucin-like protein (156 aa).

Positions 1–22 (MGKLTVVGILTLFIFYIVAASG) are cleaved as a signal peptide. 3 disulfides stabilise this stretch: Cys-30-Cys-41, Cys-58-Cys-156, and Cys-131-Cys-147. The C-type lectin domain maps to 37–156 (YKTNCYFFSP…CNTDQMGYIC (120 aa)).

In terms of tissue distribution, component of the organic matrix of calcified shell layers like nacre and prisms.

It is found in the secreted. This Mytilus galloprovincialis (Mediterranean mussel) protein is Perlucin-like protein.